Consider the following 643-residue polypeptide: Extracellular metalloproteinase 4 (643 aa).

The signal sequence occupies residues 1-18 (MHGLLLAGLLALPLNVLA). A propeptide spanning residues 19–254 (HPTESHSSGI…VHSVVDYVSA (236 aa)) is cleaved from the precursor. A compositionally biased stretch (basic and acidic residues) spans 47-57 (TKSDAVPKQDD). The disordered stretch occupies residues 47–71 (TKSDAVPKQDDESFTTSSTGDDNVS). Residues 60 to 71 (FTTSSTGDDNVS) are compositionally biased toward polar residues. Residues Asn271 and Asn420 are each glycosylated (N-linked (GlcNAc...) asparagine). A Zn(2+)-binding site is contributed by His437. The active site involves Glu438. Position 441 (His441) interacts with Zn(2+). N-linked (GlcNAc...) asparagine glycosylation is found at Asn510 and Asn553.

This sequence belongs to the peptidase M36 family. Requires Zn(2+) as cofactor.

It is found in the secreted. In terms of biological role, secreted metalloproteinase probably acting as a virulence factor. The chain is Extracellular metalloproteinase 4 (MEP4) from Arthroderma benhamiae (Trichophyton mentagrophytes).